A 267-amino-acid polypeptide reads, in one-letter code: Outer membrane protein assembly factor BamD (267 aa).

A signal peptide spans 1-16 (MKKILLTVSLGLALSA). The N-palmitoyl cysteine moiety is linked to residue C17. C17 is lipidated: S-diacylglycerol cysteine.

The protein belongs to the BamD family. As to quaternary structure, part of the Bam complex.

It localises to the cell outer membrane. In terms of biological role, part of the outer membrane protein assembly complex, which is involved in assembly and insertion of beta-barrel proteins into the outer membrane. Required for efficient transformation of Neisseria meningitidis by species-related DNA. The chain is Outer membrane protein assembly factor BamD from Neisseria meningitidis serogroup B (strain ATCC BAA-335 / MC58).